Reading from the N-terminus, the 170-residue chain is Photosystem I assembly protein Ycf3 (170 aa).

TPR repeat units follow at residues alanine 35 to proline 68, serine 72 to leucine 105, and glycine 120 to asparagine 153.

It belongs to the Ycf3 family.

It localises to the plastid. Its subcellular location is the chloroplast thylakoid membrane. Functionally, essential for the assembly of the photosystem I (PSI) complex. May act as a chaperone-like factor to guide the assembly of the PSI subunits. The chain is Photosystem I assembly protein Ycf3 from Zea mays (Maize).